We begin with the raw amino-acid sequence, 159 residues long: Aphid transmission protein (159 aa).

Belongs to the caulimoviridae ORF II family.

In terms of biological role, this protein is involved in virus transmission. The sequence is that of Aphid transmission protein from Cauliflower mosaic virus (strain PV147) (CaMV).